The chain runs to 282 residues: 2-dehydro-3-deoxyphosphooctonate aldolase (282 aa).

It belongs to the KdsA family.

It localises to the cytoplasm. The enzyme catalyses D-arabinose 5-phosphate + phosphoenolpyruvate + H2O = 3-deoxy-alpha-D-manno-2-octulosonate-8-phosphate + phosphate. Its pathway is carbohydrate biosynthesis; 3-deoxy-D-manno-octulosonate biosynthesis; 3-deoxy-D-manno-octulosonate from D-ribulose 5-phosphate: step 2/3. It participates in bacterial outer membrane biogenesis; lipopolysaccharide biosynthesis. This is 2-dehydro-3-deoxyphosphooctonate aldolase from Bradyrhizobium diazoefficiens (strain JCM 10833 / BCRC 13528 / IAM 13628 / NBRC 14792 / USDA 110).